The sequence spans 674 residues: MKVKRKIFWGALITLGIVYGDIGTSPLYVMKALIMDAGGLNGLTEDYIIGCLSLVFWTLMLMTTIKYVLIALRADNHGEGGIFALYALVRNKKKWLILPALLGGAALLADGTLTPAVTVTSAIEGLKGISIGSQPWINTQLEVNLVTFVILLVLFLIQRFGTSFIGKAFGPLMLLWFSFLAIFGIVNLIHEPLVLRALSPHYGLMLLFSPANKVGIFILGSVFLATTGAEALYSDMGHVGKRSIYLTWPFVCGALVLNYFGQGAYLIKNLGNFKTTGDIFNPFYEMLPSSVYLFGVLISTIAAIIASQALITGSFTLVEEAVGLKLLPKMKVEHPSLSRGQIYIRTINWSLCICTLLVLVYFRTSERMEAAYGLAITITMLMTTILLSQYLKDKVNVVFNGIFLAVFLSVELIFLISSLTKFTHGGYVTLLITLLILLIMVIWYFGNKLRDYLSDEEEWVSLRDYKDVLQELSNDDRIPLYISNLVMLTKVDKRTYKVKRETLYSILDKSPKKAKVYWFVTVNTTSDPYTNYYTVDMMGTRNIVNLQLYLGFKMDHRVNLYLRQVVEDLIENDIIDEQPQKYTTMPGRKIGDFRFIIIQELLSPNTRVRGWQHLLISARIFIQNHSTNPIQWFGLEFSEVKVEKVPLLLKKRRIPAMEQRMILNPKDVKRSTKE.

The next 12 membrane-spanning stretches (helical) occupy residues 7–27 (IFWG…TSPL), 52–72 (LSLV…LIAL), 95–115 (WLIL…TLTP), 145–165 (LVTF…TSFI), 169–189 (FGPL…VNLI), 204–224 (LMLL…SVFL), 244–264 (IYLT…GQGA), 291–311 (VYLF…QALI), 342–362 (IYIR…LVYF), 368–388 (MEAA…ILLS), 397–417 (VVFN…FLIS), and 425–445 (GGYV…IWYF).

This sequence belongs to the HAK/KUP transporter (TC 2.A.72) family.

The protein resides in the cell membrane. The catalysed reaction is K(+)(in) + H(+)(in) = K(+)(out) + H(+)(out). In terms of biological role, transport of potassium into the cell. Likely operates as a K(+):H(+) symporter. The protein is Probable potassium transport system protein Kup of Ligilactobacillus salivarius (strain UCC118) (Lactobacillus salivarius).